A 408-amino-acid polypeptide reads, in one-letter code: MTDGSARPTRRRITVLGSTGSIGTSTVDLLARIPDEIEVRALVGGCNAALLAEQARRLNAEVAVIHDESRHEELKTCLAGTGIRTAAGRQAVIEAGAMEADWTMAAITGAAGLEPTLAAARNGHAVALANKEALVCAGDVMLRAVAEAGATLLPVDSEHNAIAQSLGGCDMESVEKIILTASGGPFRKSSIEEMRAATPEKALKHPTWTMGAKITIDSASMANKGLEVIEAARLFGLTEDRIDVLVHPQSVVHGLVQFRDGSLVSQMGSADMRIPIAHTLAWPKRMVTPCERLDLAAYGRLEFEAPDEVRFAPLRLARQVLRAGGAAPAVFSAANEVAVDAFLNRRIGFLGIGETIDAALQAMDENPELRTLDDVLHWDARGRALAEAHILRQSGGLRNDVSENALNA.

7 residues coordinate NADPH: threonine 19, glycine 20, serine 21, isoleucine 22, glycine 45, asparagine 47, and asparagine 130. Lysine 131 is a 1-deoxy-D-xylulose 5-phosphate binding site. Residue glutamate 132 participates in NADPH binding. Residue aspartate 156 coordinates Mn(2+). 1-deoxy-D-xylulose 5-phosphate contacts are provided by serine 157, glutamate 158, serine 182, and histidine 205. Residue glutamate 158 participates in Mn(2+) binding. Glycine 211 provides a ligand contact to NADPH. Serine 218, asparagine 223, lysine 224, and glutamate 227 together coordinate 1-deoxy-D-xylulose 5-phosphate. Glutamate 227 is a Mn(2+) binding site.

Belongs to the DXR family. Mg(2+) is required as a cofactor. It depends on Mn(2+) as a cofactor.

It catalyses the reaction 2-C-methyl-D-erythritol 4-phosphate + NADP(+) = 1-deoxy-D-xylulose 5-phosphate + NADPH + H(+). The protein operates within isoprenoid biosynthesis; isopentenyl diphosphate biosynthesis via DXP pathway; isopentenyl diphosphate from 1-deoxy-D-xylulose 5-phosphate: step 1/6. Catalyzes the NADPH-dependent rearrangement and reduction of 1-deoxy-D-xylulose-5-phosphate (DXP) to 2-C-methyl-D-erythritol 4-phosphate (MEP). In Gluconobacter oxydans (strain 621H) (Gluconobacter suboxydans), this protein is 1-deoxy-D-xylulose 5-phosphate reductoisomerase.